Reading from the N-terminus, the 231-residue chain is 7-cyano-7-deazaguanine synthase (231 aa).

Position 8–18 (8–18 (FSGGQDSTTCL)) interacts with ATP. 4 residues coordinate Zn(2+): Cys-187, Cys-196, Cys-199, and Cys-202.

The protein belongs to the QueC family. The cofactor is Zn(2+).

It catalyses the reaction 7-carboxy-7-deazaguanine + NH4(+) + ATP = 7-cyano-7-deazaguanine + ADP + phosphate + H2O + H(+). The protein operates within purine metabolism; 7-cyano-7-deazaguanine biosynthesis. In terms of biological role, catalyzes the ATP-dependent conversion of 7-carboxy-7-deazaguanine (CDG) to 7-cyano-7-deazaguanine (preQ(0)). The polypeptide is 7-cyano-7-deazaguanine synthase (Vibrio vulnificus (strain CMCP6)).